The chain runs to 225 residues: Protein-L-isoaspartate O-methyltransferase 2 (225 aa).

The active site involves S73.

This sequence belongs to the methyltransferase superfamily. L-isoaspartyl/D-aspartyl protein methyltransferase family.

It is found in the cytoplasm. It carries out the reaction [protein]-L-isoaspartate + S-adenosyl-L-methionine = [protein]-L-isoaspartate alpha-methyl ester + S-adenosyl-L-homocysteine. In terms of biological role, catalyzes the methyl esterification of L-isoaspartyl residues in peptides and proteins that result from spontaneous decomposition of normal L-aspartyl and L-asparaginyl residues. It plays a role in the repair and/or degradation of damaged proteins. The polypeptide is Protein-L-isoaspartate O-methyltransferase 2 (Pelobacter propionicus (strain DSM 2379 / NBRC 103807 / OttBd1)).